The primary structure comprises 408 residues: MHPRRPEGFDGLGYRGGGREEPCPGVRPFGGGAEMGHWVTTPPDIPGSRNLHWGEKTPPYGAGTPLGAAGLNEEPGLGAGGPGAEQLNRFAGFGIGLASLFTENVLAHPCIVLRRQCQVNYHARNYHLTPFTIVNIMYSINKTQGPRALWKGMGSTFIVQGITLGTEGIISEFTPLPRELSHKWNLKQIGGHLLLKGLTHVIAMPFYSASLIETVQSEIIRDNPGILDCVKEGIGRVVGMGVPHSKRLLPLMVLIFPTALHGVLHYVISSIVQKLVLLFLKRENSHSLPTESSTSVQSMLDAYFPELIASFAASLCADVMLYPLETVLHRLHIQGTRTIIDNTDLGYEVLPINTQYEGMRDCINTIKREEGMLGFYKGFGAVVVQYTLHVAVLQLTKIIYSTLLQNVS.

Disordered stretches follow at residues Met-1–Cys-23 and His-52–Gly-80. Over residues Leu-66 to Gly-76 the composition is skewed to low complexity. Residues Gln-86–Pro-177 form a Solcar 1 repeat. Helical transmembrane passes span Phe-93–Leu-113, Phe-157–Pro-177, Ile-189–Ala-209, Leu-248–Ile-268, Phe-304–Leu-324, and Leu-373–Leu-393. The Solcar 2 repeat unit spans residues Asp-301–Leu-403.

It belongs to the mitochondrial carrier (TC 2.A.29) family.

It is found in the mitochondrion outer membrane. In terms of biological role, transmembrane protein of the mitochondrial outer membrane that controls mitochondrial organization. May regulate the assembly of the MICOS (mitochondrial contact site and cristae organizing system) complex which is essential to the biogenesis and dynamics of mitochondrial cristae, the inwards folds of the inner mitochondrial membrane. Through its interaction with the EMC (endoplasmic reticulum membrane protein complex), could regulate mitochondrial lipid homeostasis and thereby mitochondrial fission. The polypeptide is Mitochondrial outer membrane protein SLC25A46 (Gallus gallus (Chicken)).